The primary structure comprises 724 residues: Catalase-peroxidase (724 aa).

The interval 1-20 (MDENKTKPAGKCPVMHGGNT) is disordered. Positions 98 to 225 (WHSAGTYRTA…LAAVQMGLIY (128 aa)) form a cross-link, tryptophyl-tyrosyl-methioninium (Trp-Tyr) (with M-251). The active-site Proton acceptor is His-99. Positions 225–251 (YVNPEGVDGNPDPLRTAQDMRVTFSRM) form a cross-link, tryptophyl-tyrosyl-methioninium (Tyr-Met) (with W-98). His-266 lines the heme b pocket.

It belongs to the peroxidase family. Peroxidase/catalase subfamily. Homodimer or homotetramer. It depends on heme b as a cofactor. Post-translationally, formation of the three residue Trp-Tyr-Met cross-link is important for the catalase, but not the peroxidase activity of the enzyme.

The enzyme catalyses H2O2 + AH2 = A + 2 H2O. It catalyses the reaction 2 H2O2 = O2 + 2 H2O. Bifunctional enzyme with both catalase and broad-spectrum peroxidase activity. The sequence is that of Catalase-peroxidase from Pectobacterium carotovorum subsp. carotovorum (strain PC1).